Reading from the N-terminus, the 55-residue chain is Sec-independent protein translocase protein TatA (55 aa).

The chain crosses the membrane as a helical span at residues 1-21; it reads MSLGPWQLFLVLIIILVLFGA.

The protein belongs to the TatA/E family. As to quaternary structure, the Tat system comprises two distinct complexes: a TatABC complex, containing multiple copies of TatA, TatB and TatC subunits, and a separate TatA complex, containing only TatA subunits. Substrates initially bind to the TatABC complex, which probably triggers association of the separate TatA complex to form the active translocon.

The protein resides in the cell membrane. Functionally, part of the twin-arginine translocation (Tat) system that transports large folded proteins containing a characteristic twin-arginine motif in their signal peptide across membranes. TatA could form the protein-conducting channel of the Tat system. The sequence is that of Sec-independent protein translocase protein TatA from Wolbachia pipientis wMel.